Here is a 342-residue protein sequence, read N- to C-terminus: Succinylglutamate desuccinylase (342 aa).

Residues histidine 63, glutamate 66, and histidine 159 each coordinate Zn(2+). Glutamate 222 is a catalytic residue.

This sequence belongs to the AspA/AstE family. Succinylglutamate desuccinylase subfamily. Zn(2+) serves as cofactor.

The enzyme catalyses N-succinyl-L-glutamate + H2O = L-glutamate + succinate. It functions in the pathway amino-acid degradation; L-arginine degradation via AST pathway; L-glutamate and succinate from L-arginine: step 5/5. Its function is as follows. Transforms N(2)-succinylglutamate into succinate and glutamate. The chain is Succinylglutamate desuccinylase from Paraburkholderia xenovorans (strain LB400).